A 390-amino-acid polypeptide reads, in one-letter code: RNA binding protein fox-1 homolog 2 (390 aa).

Residues 1–127 (MQNEPLTPGY…STPKRLHVSN (127 aa)) are disordered. Polar residues-rich tracts occupy residues 18–28 (SQGNQEPTTTP) and 65–95 (GEHN…SLTT). His-67 carries the post-translational modification Phosphothreonine. Residues 97-117 (GGAQTDGQQSQTQSSENSESK) are compositionally biased toward low complexity. An RRM domain is found at 121-197 (KRLHVSNIPF…RKIEVNNATA (77 aa)). Gly-249, Gly-267, Phe-268, Ala-277, and Arg-281 each carry omega-N-methylarginine. Asymmetric dimethylarginine occurs at positions 297 and 329. Asymmetric dimethylarginine; alternate occurs at positions 381 and 386. Residues Arg-381 and Arg-386 each carry the omega-N-methylarginine; alternate modification.

Interacts with ER-alpha N-terminal activation domain. Interacts with RBPMS; the interaction allows cooperative assembly of stable cell-specific alternative splicing regulatory complexes.

Its subcellular location is the nucleus. It is found in the cytoplasm. Functionally, RNA-binding protein that regulates alternative splicing events by binding to 5'-UGCAUGU-3' elements. Prevents binding of U2AF2 to the 3'-splice site. Regulates alternative splicing of tissue-specific exons and of differentially spliced exons during erythropoiesis. RNA-binding protein that seems to act as a coregulatory factor of ER-alpha. Together with RNA binding proteins RBPMS and MBNL1/2, activates vascular smooth muscle cells alternative splicing events. The chain is RNA binding protein fox-1 homolog 2 (RBFOX2) from Homo sapiens (Human).